We begin with the raw amino-acid sequence, 57 residues long: MAKAKGNREKIKLVSSANTGHFYTTEKNKRNMPEKMEIKKFDPVVRQHVMYKEAKIK.

This sequence belongs to the bacterial ribosomal protein bL33 family.

This chain is Large ribosomal subunit protein bL33, found in Shewanella halifaxensis (strain HAW-EB4).